Reading from the N-terminus, the 265-residue chain is Adenosine 5'-phosphosulfate reductase (265 aa).

[4Fe-4S] cluster is bound by residues Cys135, Cys136, Cys218, and Cys221. Residue Cys246 is the Nucleophile; cysteine thiosulfonate intermediate of the active site.

The protein belongs to the PAPS reductase family. CysH subfamily. Requires [4Fe-4S] cluster as cofactor.

It is found in the cytoplasm. The catalysed reaction is [thioredoxin]-disulfide + sulfite + AMP + 2 H(+) = adenosine 5'-phosphosulfate + [thioredoxin]-dithiol. It functions in the pathway sulfur metabolism; hydrogen sulfide biosynthesis; sulfite from sulfate. Functionally, catalyzes the formation of sulfite from adenosine 5'-phosphosulfate (APS) using thioredoxin as an electron donor. In Rhizobium meliloti (strain 1021) (Ensifer meliloti), this protein is Adenosine 5'-phosphosulfate reductase.